The following is a 128-amino-acid chain: Nanos homolog 1 (128 aa).

The essential for its translational repressor activity stretch occupies residues Phe-7 to Gly-23. Positions Gln-25–Val-52 are disordered. The Nanos-type zinc finger occupies Gly-56–Leu-110. Zn(2+) is bound by residues Cys-57, Cys-60, His-73, Cys-84, Cys-92, Cys-95, His-103, and Cys-108. 2 consecutive short sequence motifs (C2HC) follow at residues Cys-57–Cys-84 and Cys-92–Cys-108.

Belongs to the nanos family. In terms of assembly, interacts with ccnb1. In terms of tissue distribution, ovary and testis.

Its subcellular location is the cytoplasm. It is found in the perinuclear region. Acts as a translational repressor. Can mediate repression affecting different steps in the translation process: cap-driven, IRES-driven, polyadenylated RNAs or nonpolyadenylated RNAs. Essential for the development of primordial germ cells (PGCs) by ensuring their proper migration and survival. The protein is Nanos homolog 1 (nanos1) of Xenopus laevis (African clawed frog).